Reading from the N-terminus, the 340-residue chain is MSAEPELIELRELAPSGRIGPGRTRLERANALRIAPGTTRNPSQQHVPGRGHRFQPAGPTTHTWCDLCGDFIWGVVRKGLQCAHCKFTCHYRCRALVCLDCCGPRDLGWDSALERDTNVDEAVERETPDLSQAETEQKIKDYNGQINSNLFMSLNKDGSYTGFIKVQLKLVRPVSVPSSKKPPSLQDARRGTGRSTAVKRRTSFYLPKDAIKHLHVLSRTRAREVIEALLRKFMVVDDPRKFALFERTERHGQVYLRKLSDDEQPLKLRLLAGPSEKALSFVLKENDSGEVNWDAFSMPELHNFLRILQREEEEHLRQILQKYSRCRQKIQEALHACPLG.

Residue S2 is modified to N-acetylserine. Residue S2 is modified to Phosphoserine. The segment at 2-115 is mediates interaction with E4F1; it reads SAEPELIELR…DLGWDSALER (114 aa). The Phorbol-ester/DAG-type zinc-finger motif lies at 51-101; sequence GHRFQPAGPTTHTWCDLCGDFIWGVVRKGLQCAHCKFTCHYRCRALVCLDC. The span at 175 to 185 shows a compositional bias: low complexity; sequence SVPSSKKPPSL. Positions 175 to 196 are disordered; sequence SVPSSKKPPSLQDARRGTGRST. Residues 194–288 form the Ras-associating domain; that stretch reads RSTAVKRRTS…LSFVLKENDS (95 aa). Residues 290-337 enclose the SARAH domain; that stretch reads EVNWDAFSMPELHNFLRILQREEEEHLRQILQKYSRCRQKIQEALHAC. The segment at 311-314 is MOAP1-binding; the sequence is EEEE.

Interacts with MAP1S and XPA. Binds to the N-terminal of CDC20 during prometaphase. Binds to STK3/MST2 and STK4/MST1. Recruited to the TNFRSF1A and TNFRSF10A complexes in response to their respective cognate ligand, after internalization. Can self-associate. Part of a complex with MDM2, DAXX, RASSF1 and USP7. In terms of assembly, interacts with MOAP1 and E4F1. Interacts with RSSF5 and probably associates with HRAS via a RSSF1 isoform A-RSSF5 heterodimer. Interacts (via C-terminus) with DAXX (via N-terminus); the interaction is independent of MDM2 and TP53. Interacts (via N-terminus) with MDM2 (via C-terminus); the interaction is independent of TP53. Interacts with RAB39A. Interacts with RAB39B; the interaction is weak. As to quaternary structure, interacts with ECM2. Interacts with RAB39B; the interaction is strong. Does not interact with RAB39A.

The protein resides in the cytoplasm. The protein localises to the cytoskeleton. Its subcellular location is the microtubule organizing center. It localises to the centrosome. It is found in the spindle. The protein resides in the spindle pole. The protein localises to the nucleus. Its function is as follows. Potential tumor suppressor. Required for death receptor-dependent apoptosis. Mediates activation of Mediates activation of STK3/MST2 and STK4/MST1 during Fas-induced apoptosis by preventing their dephosphorylation. When associated with MOAP1, promotes BAX conformational change and translocation to mitochondrial membranes in response to TNF and TNFSF10 stimulation. Isoform A interacts with CDC20, an activator of the anaphase-promoting complex, APC, resulting in the inhibition of APC activity and mitotic progression. Inhibits proliferation by negatively regulating cell cycle progression at the level of G1/S-phase transition by regulating accumulation of cyclin D1 protein. Isoform C has been shown not to perform these roles, no function has been identified for this isoform. Isoform A disrupts interactions among MDM2, DAXX and USP7, thus contributing to the efficient activation of TP53 by promoting MDM2 self-ubiquitination in cell-cycle checkpoint control in response to DNA damage. This is Ras association domain-containing protein 1 from Mus musculus (Mouse).